The primary structure comprises 122 residues: Large ribosomal subunit protein uL14 (122 aa).

This sequence belongs to the universal ribosomal protein uL14 family. Part of the 50S ribosomal subunit. Forms a cluster with proteins L3 and L19. In the 70S ribosome, L14 and L19 interact and together make contacts with the 16S rRNA in bridges B5 and B8.

Functionally, binds to 23S rRNA. Forms part of two intersubunit bridges in the 70S ribosome. This is Large ribosomal subunit protein uL14 from Mycoplasma genitalium (strain ATCC 33530 / DSM 19775 / NCTC 10195 / G37) (Mycoplasmoides genitalium).